Consider the following 602-residue polypeptide: Elongation factor 4 (602 aa).

Residues 7-189 (KYIRNFSIVA…AIVNKVPAPE (183 aa)) form the tr-type G domain. Residues 19–24 (DHGKST) and 136–139 (NKID) contribute to the GTP site.

This sequence belongs to the TRAFAC class translation factor GTPase superfamily. Classic translation factor GTPase family. LepA subfamily.

It localises to the cell membrane. It carries out the reaction GTP + H2O = GDP + phosphate + H(+). In terms of biological role, required for accurate and efficient protein synthesis under certain stress conditions. May act as a fidelity factor of the translation reaction, by catalyzing a one-codon backward translocation of tRNAs on improperly translocated ribosomes. Back-translocation proceeds from a post-translocation (POST) complex to a pre-translocation (PRE) complex, thus giving elongation factor G a second chance to translocate the tRNAs correctly. Binds to ribosomes in a GTP-dependent manner. In Clostridium botulinum (strain Okra / Type B1), this protein is Elongation factor 4.